Reading from the N-terminus, the 397-residue chain is Lysophospholipid transporter LplT (397 aa).

Topologically, residues 1–17 (MSESVHTNTSLWSKGMK) are periplasmic. Residues 18 to 38 (AVIVAQFLSAFGDNALLFATL) traverse the membrane as a helical segment. The Cytoplasmic segment spans residues 39–52 (ALLKAQFYPEWSQP). A helical transmembrane segment spans residues 53–73 (ILQMVFVGAYILFAPFVGQVA). The Periplasmic portion of the chain corresponds to 74 to 90 (DSFAKGRVMMFANGLKL). The chain crosses the membrane as a helical span at residues 91–111 (LGAASICFGINPFLGYTLVGV). The Cytoplasmic portion of the chain corresponds to 112–144 (GAAAYSPAKYGILGELTTGSKLVKANGLMEAST). A helical transmembrane segment spans residues 145-165 (IAAILLGSVAGGVLADWHVLV). Residue alanine 166 is a topological domain, periplasmic. The helical transmembrane segment at 167–187 (LAACALAYGGAVVANIYIPKL) threads the bilayer. Over 188 to 226 (AAARPGQSWNLINMTRSFLNACTSLWRNGETRFSLVGTS) the chain is Cytoplasmic. Residues 227 to 247 (LFWGAGVTLRFLLVLWVPVAL) form a helical membrane-spanning segment. Topologically, residues 248-256 (GITDNATPT) are periplasmic. A helical membrane pass occupies residues 257–277 (YLNAMVAIGIVVGAGAAAKLV). At 278–280 (TLE) the chain is on the cytoplasmic side. A helical transmembrane segment spans residues 281 to 301 (TVSRCMPAGILIGVVVLIFSL). At 302–304 (QHE) the chain is on the periplasmic side. Residues 305-325 (LLPAYALLMLIGVMGGFFVVP) form a helical membrane-spanning segment. Topologically, residues 326-343 (LNALLQERGKKSVGAGNA) are cytoplasmic. A helical transmembrane segment spans residues 344–364 (IAVQNLGENSAMLLMLGIYSL). The Periplasmic portion of the chain corresponds to 365-366 (AV). A helical transmembrane segment spans residues 367 to 387 (MIGIPVVPIGIGFGALFALAI). Residues 388 to 397 (TALWIWQRRH) lie on the Cytoplasmic side of the membrane.

Belongs to the major facilitator superfamily. LplT (TC 2.A.1.42) family.

It is found in the cell inner membrane. Its function is as follows. Catalyzes the facilitated diffusion of 2-acyl-glycero-3-phosphoethanolamine (2-acyl-GPE) into the cell. This chain is Lysophospholipid transporter LplT, found in Escherichia coli O8 (strain IAI1).